Reading from the N-terminus, the 374-residue chain is Chaperone protein DnaJ (374 aa).

Residues 5–70 form the J domain; sequence DYYEVLGVNR…RKRASYDQFG (66 aa). A CR-type zinc finger spans residues 133 to 210; that stretch reads GLSRTIKVPT…CHGQGRQQQT (78 aa). Residues Cys146, Cys149, Cys162, Cys165, Cys184, Cys187, Cys198, and Cys201 each coordinate Zn(2+). 4 CXXCXGXG motif repeats span residues 146 to 153, 162 to 169, 184 to 191, and 198 to 205; these read CKTCNGSG, CPRCNGSG, CSVCRGRG, and CTDCHGQG.

It belongs to the DnaJ family. In terms of assembly, homodimer. Zn(2+) serves as cofactor.

The protein resides in the cytoplasm. Functionally, participates actively in the response to hyperosmotic and heat shock by preventing the aggregation of stress-denatured proteins and by disaggregating proteins, also in an autonomous, DnaK-independent fashion. Unfolded proteins bind initially to DnaJ; upon interaction with the DnaJ-bound protein, DnaK hydrolyzes its bound ATP, resulting in the formation of a stable complex. GrpE releases ADP from DnaK; ATP binding to DnaK triggers the release of the substrate protein, thus completing the reaction cycle. Several rounds of ATP-dependent interactions between DnaJ, DnaK and GrpE are required for fully efficient folding. Also involved, together with DnaK and GrpE, in the DNA replication of plasmids through activation of initiation proteins. This is Chaperone protein DnaJ from Coxiella burnetii (strain CbuG_Q212) (Coxiella burnetii (strain Q212)).